The following is a 59-amino-acid chain: Chromatin protein Cren7 (59 aa).

This sequence belongs to the Cren7 family. In terms of assembly, monomer. In terms of processing, methylated at multiple sites, to varying extents.

It is found in the chromosome. The protein resides in the cytoplasm. In terms of biological role, a chromatin protein, binds double-stranded DNA without sequence specificity. Constrains negative DNA supercoils. This Pyrobaculum neutrophilum (strain DSM 2338 / JCM 9278 / NBRC 100436 / V24Sta) (Thermoproteus neutrophilus) protein is Chromatin protein Cren7.